The primary structure comprises 211 residues: Pyrrolidone-carboxylate peptidase 1 (211 aa).

Active-site residues include glutamate 79, cysteine 142, and histidine 164.

Belongs to the peptidase C15 family. In terms of assembly, homotetramer.

Its subcellular location is the cytoplasm. The catalysed reaction is Release of an N-terminal pyroglutamyl group from a polypeptide, the second amino acid generally not being Pro.. Its function is as follows. Removes 5-oxoproline from various penultimate amino acid residues except L-proline. The chain is Pyrrolidone-carboxylate peptidase 1 (pcp1) from Saccharolobus solfataricus (strain ATCC 35092 / DSM 1617 / JCM 11322 / P2) (Sulfolobus solfataricus).